We begin with the raw amino-acid sequence, 753 residues long: Fatty acid oxidation complex subunit alpha (753 aa).

The segment at 8 to 197 is enoyl-CoA hydratase; the sequence is SVTHPAFTLN…KMGLVDDVVP (190 aa). The segment at 313–747 is 3-hydroxyacyl-CoA dehydrogenase; that stretch reads RAIHRVGVLG…FYPVDANIDE (435 aa). A disordered region spans residues 593–622; it reads SNPTLHSNSTKNSSPTKNGNSPAKRNSFKW. Positions 599–614 are enriched in low complexity; it reads SNSTKNSSPTKNGNSP.

It in the N-terminal section; belongs to the enoyl-CoA hydratase/isomerase family. This sequence in the central section; belongs to the 3-hydroxyacyl-CoA dehydrogenase family. Heterotetramer of two alpha chains (FadJ) and two beta chains (FadI).

Its subcellular location is the cytoplasm. It catalyses the reaction a (3S)-3-hydroxyacyl-CoA = a (2E)-enoyl-CoA + H2O. The enzyme catalyses a 4-saturated-(3S)-3-hydroxyacyl-CoA = a (3E)-enoyl-CoA + H2O. It carries out the reaction a (3S)-3-hydroxyacyl-CoA + NAD(+) = a 3-oxoacyl-CoA + NADH + H(+). The catalysed reaction is (3S)-3-hydroxybutanoyl-CoA = (3R)-3-hydroxybutanoyl-CoA. Its pathway is lipid metabolism; fatty acid beta-oxidation. Its function is as follows. Catalyzes the formation of a hydroxyacyl-CoA by addition of water on enoyl-CoA. Also exhibits 3-hydroxyacyl-CoA epimerase and 3-hydroxyacyl-CoA dehydrogenase activities. This is Fatty acid oxidation complex subunit alpha from Yersinia pseudotuberculosis serotype I (strain IP32953).